Reading from the N-terminus, the 917-residue chain is MLKPDKMGTLTDFGQIALKWDPKNLEIRTMSVEKTLEPLVLQVTTLVNTKGPSKKKKGKSKRASALVAAVEKATENFIQKGEQIAYENPDITQEMLTAVDEVKKTGDAMSIAAREFSEDPCSSLKRGNMVRAARNLLSAVTRLLILADMVDVHLLLKSLHIVEDDLNKLKNASSQDELMDNMRQFGRNAGELIKQAAKRQQELKDPQLRDDLAAARAMLKKHSTMLLTASKVYVRHPELDLAKVNRDFILKQVCDAVNTISDVAQGKSSQPTDIYSGAGELAAALDDFDEGIVMDPMTYSEKRSRQLLEERLESIISAAALMADADCTRDERRERIVAECNAVRQALQDLLSEYMSNMSQKDNSPGLSRAIDQMCRKTRDLRRQLRKAVVDHVSDSFLETTTPLLDLIEAAKSGNEKKVREKSEIFTKHAEKLVEVANLVCSMSNNEDGVKMVRYAAAQIESLCPQVINAASILTVRPNSKVAQENMTTYRQAWEVQVRILTEAVDDITTIDDFLAVSENHILEDVNKCVMALQVGDARDLRATAGAIQGRSSRVCNVVEAEMDNYEPCIYTKRVLEAVKVLRDQVMMKFDQRVGAAVGALSNNSNKDVDENDFIDASRLVYDGVREIRRAVLMNRSSEDLDTDTEFEPVEDLTLETRSRSSAHTGDQTVDEYPDISGICTAREAMRKMTEEDKQKIAQQVELFRREKLTFDSEVAKWDDTGNDIIFLAKHMCMIMMEMTDFTRGRGPLKTTMDVINAAKKISEAGTKLDKLTREIAEQCPESSTKKDLLAYLQRIALYCHQIQITSKVKADVQNISGELIVSGLDSATSLIQAAKNLMNAVVLTVKYSYVASTKYTRQGTVSSPIVVWKMKAPEKKPLVRPEKPEEVRAKVRKGSQKKVQNPIHALSEFQSPADAV.

Thr643 and Thr645 each carry phosphothreonine. 2 positions are modified to phosphoserine: Ser659 and Ser662. Basic and acidic residues predominate over residues 878–890; that stretch reads PLVRPEKPEEVRA. The segment at 878 to 905 is disordered; sequence PLVRPEKPEEVRAKVRKGSQKKVQNPIH.

Belongs to the vinculin/alpha-catenin family. As to quaternary structure, interacts with arm/armadillo protein. Rapidly phosphorylated by CK2 and more slowly by CK1.

Its subcellular location is the cytoplasm. It is found in the cytoskeleton. The protein localises to the cell junction. The protein resides in the adherens junction. It localises to the cell membrane. Functionally, associates with the cytoplasmic domain of a variety of cadherins. The association of catenins to cadherins produces a complex which is linked to the actin filament network, and which seems to be of primary importance for cadherins cell-adhesion properties. This chain is Catenin alpha, found in Drosophila melanogaster (Fruit fly).